Reading from the N-terminus, the 400-residue chain is Serine/threonine transporter SstT (400 aa).

The next 10 membrane-spanning stretches (helical) occupy residues 11 to 31 (IGLV…GWLA), 45 to 65 (FVGA…MAAI), 81 to 101 (IMYM…SFLF), 138 to 158 (AIAE…GFAL), 175 to 195 (AISQ…LGLV), 213 to 233 (ILMV…PLII), 242 to 264 (YPLV…SSAA), 295 to 315 (MAGA…TLGI), 327 to 347 (LVAT…LLLI), and 354 to 374 (FSIP…IGVI).

Belongs to the dicarboxylate/amino acid:cation symporter (DAACS) (TC 2.A.23) family.

The protein localises to the cell inner membrane. The catalysed reaction is L-serine(in) + Na(+)(in) = L-serine(out) + Na(+)(out). The enzyme catalyses L-threonine(in) + Na(+)(in) = L-threonine(out) + Na(+)(out). Involved in the import of serine and threonine into the cell, with the concomitant import of sodium (symport system). The chain is Serine/threonine transporter SstT from Psychrobacter cryohalolentis (strain ATCC BAA-1226 / DSM 17306 / VKM B-2378 / K5).